Here is a 263-residue protein sequence, read N- to C-terminus: Acyl-[acyl-carrier-protein]--UDP-N-acetylglucosamine O-acyltransferase (263 aa).

This sequence belongs to the transferase hexapeptide repeat family. LpxA subfamily. As to quaternary structure, homotrimer.

The protein localises to the cytoplasm. The catalysed reaction is a (3R)-hydroxyacyl-[ACP] + UDP-N-acetyl-alpha-D-glucosamine = a UDP-3-O-[(3R)-3-hydroxyacyl]-N-acetyl-alpha-D-glucosamine + holo-[ACP]. Its pathway is glycolipid biosynthesis; lipid IV(A) biosynthesis; lipid IV(A) from (3R)-3-hydroxytetradecanoyl-[acyl-carrier-protein] and UDP-N-acetyl-alpha-D-glucosamine: step 1/6. Its function is as follows. Involved in the biosynthesis of lipid A, a phosphorylated glycolipid that anchors the lipopolysaccharide to the outer membrane of the cell. The chain is Acyl-[acyl-carrier-protein]--UDP-N-acetylglucosamine O-acyltransferase from Xanthomonas oryzae pv. oryzae (strain PXO99A).